The following is a 185-amino-acid chain: Peptidyl-tRNA hydrolase (185 aa).

Y15 serves as a coordination point for tRNA. H20 (proton acceptor) is an active-site residue. TRNA is bound by residues Y64, N66, and N112.

This sequence belongs to the PTH family. Monomer.

It localises to the cytoplasm. It catalyses the reaction an N-acyl-L-alpha-aminoacyl-tRNA + H2O = an N-acyl-L-amino acid + a tRNA + H(+). Functionally, hydrolyzes ribosome-free peptidyl-tRNAs (with 1 or more amino acids incorporated), which drop off the ribosome during protein synthesis, or as a result of ribosome stalling. In terms of biological role, catalyzes the release of premature peptidyl moieties from peptidyl-tRNA molecules trapped in stalled 50S ribosomal subunits, and thus maintains levels of free tRNAs and 50S ribosomes. This Porphyromonas gingivalis (strain ATCC BAA-308 / W83) protein is Peptidyl-tRNA hydrolase.